Reading from the N-terminus, the 91-residue chain is UPF0250 protein Psyr_4360 (91 aa).

Belongs to the UPF0250 family.

This is UPF0250 protein Psyr_4360 from Pseudomonas syringae pv. syringae (strain B728a).